Here is a 584-residue protein sequence, read N- to C-terminus: Ras-specific guanine nucleotide-releasing factor RalGPS1 (584 aa).

Residues 1-13 (MDLMNGQSSSVNI) show a composition bias toward polar residues. Disordered regions lie at residues 1 to 29 (MDLM…SLSD), 285 to 338 (IEPG…IPHG), and 380 to 407 (HVPS…SELS). Over residues 14-26 (AATASEKSSSSES) the composition is skewed to low complexity. A Ras-GEF domain is found at 50-288 (TPEEYAGQIT…YKLSLKIEPG (239 aa)). Positions 326–329 (PTPP) match the PXXP motif. The segment covering 388-404 (ESSTLSSGISIGSSDGS) has biased composition (low complexity). Residues 458-570 (AVTIQGVLRR…WFKHLSAACQ (113 aa)) enclose the PH domain.

It localises to the cytoplasm. It is found in the cell membrane. Its function is as follows. Guanine nucleotide exchange factor. May be involved in cytoskeletal organization. The polypeptide is Ras-specific guanine nucleotide-releasing factor RalGPS1 (RALGPS1) (Gallus gallus (Chicken)).